Consider the following 79-residue polypeptide: DNA-directed RNA polymerase subunit omega (79 aa).

This sequence belongs to the RNA polymerase subunit omega family. As to quaternary structure, in cyanobacteria the RNAP catalytic core is composed of 2 alpha, 1 beta, 1 beta', 1 gamma and 1 omega subunit. When a sigma factor is associated with the core the holoenzyme is formed, which can initiate transcription.

The catalysed reaction is RNA(n) + a ribonucleoside 5'-triphosphate = RNA(n+1) + diphosphate. Promotes RNA polymerase assembly. Latches the N- and C-terminal regions of the beta' subunit thereby facilitating its interaction with the beta and alpha subunits. This is DNA-directed RNA polymerase subunit omega from Synechococcus sp. (strain JA-3-3Ab) (Cyanobacteria bacterium Yellowstone A-Prime).